Consider the following 420-residue polypeptide: Zinc finger and BTB domain-containing protein 42 (420 aa).

A BTB domain is found at 24–92; that stretch reads CDCTVLVGDA…MYEGRLDLHN (69 aa). Disordered stretches follow at residues 127–204 and 222–247; these read TRTL…HPPC and VKAE…PPPV. Residues 227 to 241 are compositionally biased toward low complexity; it reads DSFSEQDSSSPQSAD. C2H2-type zinc fingers lie at residues 292–314, 332–354, 360–382, and 388–411; these read CICP…LSAH, PTCP…ERTH, YTCV…AVVH, and HACR…RKFH.

This sequence belongs to the krueppel C2H2-type zinc-finger protein family. ZBTB18 subfamily. Highly expressed in skeletal muscle and ovary (at protein level). Low expression in brain, lung, spleen, liver and heart (at protein level). Not detected in kidney and intestines (at protein level). Also observed in testis and, at lower levels, in stomach and nervous system.

The protein resides in the cytoplasm. It localises to the nucleus. The protein localises to the nucleoplasm. In terms of biological role, transcriptional repressor. Specifically binds DNA and probably acts by recruiting chromatin remodeling multiprotein complexes. This chain is Zinc finger and BTB domain-containing protein 42 (Zbtb42), found in Mus musculus (Mouse).